The sequence spans 369 residues: C2 calcium-dependent domain-containing protein 4A (369 aa).

Disordered regions lie at residues 151–176 (PRAP…ARRP) and 197–240 (RSRR…PFPE). Pro residues predominate over residues 153–168 (APGPATPAAPGCPRPP). Positions 220–237 (SQSPARAPSTSPPSSRVP) are enriched in low complexity. Residues 253–369 (AGDALRLAAE…ELSLGALLLL (117 aa)) enclose the C2 domain.

This sequence belongs to the C2CD4 family. Specifically expressed in endothelial cells.

It localises to the nucleus. Its function is as follows. May be involved in inflammatory process. May regulate cell architecture and adhesion. The chain is C2 calcium-dependent domain-containing protein 4A (C2CD4A) from Homo sapiens (Human).